A 158-amino-acid polypeptide reads, in one-letter code: SsrA-binding protein (158 aa).

Belongs to the SmpB family.

It is found in the cytoplasm. In terms of biological role, required for rescue of stalled ribosomes mediated by trans-translation. Binds to transfer-messenger RNA (tmRNA), required for stable association of tmRNA with ribosomes. tmRNA and SmpB together mimic tRNA shape, replacing the anticodon stem-loop with SmpB. tmRNA is encoded by the ssrA gene; the 2 termini fold to resemble tRNA(Ala) and it encodes a 'tag peptide', a short internal open reading frame. During trans-translation Ala-aminoacylated tmRNA acts like a tRNA, entering the A-site of stalled ribosomes, displacing the stalled mRNA. The ribosome then switches to translate the ORF on the tmRNA; the nascent peptide is terminated with the 'tag peptide' encoded by the tmRNA and targeted for degradation. The ribosome is freed to recommence translation, which seems to be the essential function of trans-translation. The polypeptide is SsrA-binding protein (Hydrogenovibrio crunogenus (strain DSM 25203 / XCL-2) (Thiomicrospira crunogena)).